A 208-amino-acid polypeptide reads, in one-letter code: Single-stranded DNA-binding protein DdrA (208 aa).

It belongs to the RAD52 family. As to quaternary structure, homooligomer composed of 8 to 10 subunits; probably arranged in a ring-structure.

SsDNA-binding protein that contributes to the ionizing radiation resistance of D.radiodurans. Plays a role in DNA repair and genome reconstitution, in a RecA-independent process, since DdrA is essential for recovery from severe genomic fragmentation as a result of exposure to severe levels of ionizing radiation in an environment lacking nutrients. In vitro, binds to the 3'-ends of single-stranded DNA, protecting them from nuclease degradation. Thus, DdrA is part of a DNA end-protection system that helps to preserve genome integrity following irradiation or desiccation. Does not display DNA strand annealing activity, unlike eukaryotic Rad52 protein homologs. The polypeptide is Single-stranded DNA-binding protein DdrA (ddrA) (Deinococcus radiodurans (strain ATCC 13939 / DSM 20539 / JCM 16871 / CCUG 27074 / LMG 4051 / NBRC 15346 / NCIMB 9279 / VKM B-1422 / R1)).